Consider the following 369-residue polypeptide: Glutamine synthetase (369 aa).

The GS beta-grasp domain maps to 23-102 (VIAEYIWVDS…VLAECWNNDG (80 aa)). Residues 109 to 369 (HRHEAAKLFE…MSKEFERESS (261 aa)) form the GS catalytic domain.

It belongs to the glutamine synthetase family. As to quaternary structure, homooctamer.

Its subcellular location is the cytoplasm. The enzyme catalyses L-glutamate + NH4(+) + ATP = L-glutamine + ADP + phosphate + H(+). The protein is Glutamine synthetase (GLN1) of Eremothecium gossypii (strain ATCC 10895 / CBS 109.51 / FGSC 9923 / NRRL Y-1056) (Yeast).